Consider the following 102-residue polypeptide: Spexin prohormone 1 (102 aa).

Residues 1–26 (MKDLRTLAAYALALLLLATFVSHSWS) form the signal peptide. Residues 27–35 (APKGSFQRR) constitute a propeptide that is removed on maturation. Gln-49 is modified (glutamine amide). Residues 50–102 (GRRFVSEDRNEGDLYDTIRLESRSQNTENLSISKAAAFLLNILQQARDEDEPY) constitute a propeptide that is removed on maturation.

This sequence belongs to the spexin family. In terms of tissue distribution, mainly expressed in the brain and ovary. Detected bilaterally in the adult brainstem. Expressed in neurons in the dorsal habenula (dHb). In the dHb some neurons project into the interpeduncular nucleus (IPN) where expression often overlaps with galr2a and galr2b. Weakly expressed in the liver, intestine, kidney, heart and gill.

It localises to the secreted. The protein localises to the extracellular space. The protein resides in the cytoplasmic vesicle. It is found in the secretory vesicle. Functionally, plays a role in the regulation of food intake and energy metabolism. May also be involved in suppressing the anxiety response by promoting the expression of serotonin-related genes such as fev, tph2 and slc6a4a. Its function is as follows. Acts as a ligand for galanin receptors galr2a and galr2b. Brain administration of the peptide inhibits food consumption and elevates levels of glucose, triacylglycerol and cholesterol in the serum. Likely to control food intake by regulating appetite related genes which includes the negative regulation of the orexigenic factor agrp. By controlling food intake it may act as a satiety factor in energy metabolism. The polypeptide is Spexin prohormone 1 (spx) (Danio rerio (Zebrafish)).